Reading from the N-terminus, the 429-residue chain is MSFYRSWIGGRGDLVQRYTSSIRDDAEIAEEVVKVMKAHVTHLAEIGALRKEVADKIVAALEEVDPTELLRGEFEDIHEALEKWLIDKLGEDVGGWVGLARSRNDHVAAAIRLAALKKVGALREAAMRLRCALAARALEYADCPMPSFTHFQPAQVVTFGHYLLAVDELVAEFLHVLAAAEDLAKRSPLGAGPAGGVRTPVDRRRLAELAGFKDVVENTLYASGGRFFALALASAVTSFLVELSRAVDDFIRWNNPLLGYVEAPPEHVSTSSIMPHKRNLVTLEVLRARSEEAVGHYAALSGVVAKVGLGYSLDLQEATRHLWDILNIAIEGVEVLADFVEKIKFNCEKGRRDAELYYATSSDTAEERALRGVPFRKAYFELASEIREGKARLLTVDEALKRPVLGSANPEEVRKSASRRLALCRPKSF.

This sequence belongs to the lyase 1 family. Argininosuccinate lyase subfamily.

It localises to the cytoplasm. It carries out the reaction 2-(N(omega)-L-arginino)succinate = fumarate + L-arginine. Its pathway is amino-acid biosynthesis; L-arginine biosynthesis; L-arginine from L-ornithine and carbamoyl phosphate: step 3/3. The protein is Argininosuccinate lyase of Pyrobaculum arsenaticum (strain DSM 13514 / JCM 11321 / PZ6).